A 342-amino-acid chain; its full sequence is MRAPEFQSNTTTSTGCDVCLDPQKSFANLFKRTVILLSGPTGSGKTDVSLRLASMVDGEIISVDSMQVYRGMDIGTAKVSLEDRQRIPHYLIDICHVQELFNAVDFYYQAMHACQNILSRNKVPILVGGSGFYFHTFLSGPPGGPPADREFRDQLALYIQDHGLSFLYENLCQKDPEYARTITKNDKNKIVRALEIIHLTGRKVSEHSWSMEPQESREYNCRGWFLSPPKELLLDNIQLRCQKMLEDNLIGEVRGLLEQGIRENSSASKAIGYREWIEFIDQGSPEEAYEAVKQKFITNTCQYTKKQRTWFKRYPVFRELPTLGLTAETLAGKIAEDYFLHG.

ATP is bound at residue G39–T46. T41 to T46 serves as a coordination point for substrate. Residues D64–Q67 form an interaction with substrate tRNA region.

It belongs to the IPP transferase family. In terms of assembly, monomer. Mg(2+) is required as a cofactor.

It carries out the reaction adenosine(37) in tRNA + dimethylallyl diphosphate = N(6)-dimethylallyladenosine(37) in tRNA + diphosphate. In terms of biological role, catalyzes the transfer of a dimethylallyl group onto the adenine at position 37 in tRNAs that read codons beginning with uridine, leading to the formation of N6-(dimethylallyl)adenosine (i(6)A). This Chlamydia caviae (strain ATCC VR-813 / DSM 19441 / 03DC25 / GPIC) (Chlamydophila caviae) protein is tRNA dimethylallyltransferase.